A 274-amino-acid chain; its full sequence is Large ribosomal subunit protein uL2 (274 aa).

Residues 228–254 form a disordered region; the sequence is VDHPMGGGEGRASGGHPRSRKGLYAKG. A compositionally biased stretch (basic residues) spans 244 to 254; sequence PRSRKGLYAKG.

The protein belongs to the universal ribosomal protein uL2 family. Part of the 50S ribosomal subunit. Forms a bridge to the 30S subunit in the 70S ribosome.

One of the primary rRNA binding proteins. Required for association of the 30S and 50S subunits to form the 70S ribosome, for tRNA binding and peptide bond formation. It has been suggested to have peptidyltransferase activity; this is somewhat controversial. Makes several contacts with the 16S rRNA in the 70S ribosome. This is Large ribosomal subunit protein uL2 from Azobacteroides pseudotrichonymphae genomovar. CFP2.